Consider the following 105-residue polypeptide: Putative pterin-4-alpha-carbinolamine dehydratase (105 aa).

Belongs to the pterin-4-alpha-carbinolamine dehydratase family.

It carries out the reaction (4aS,6R)-4a-hydroxy-L-erythro-5,6,7,8-tetrahydrobiopterin = (6R)-L-erythro-6,7-dihydrobiopterin + H2O. The polypeptide is Putative pterin-4-alpha-carbinolamine dehydratase (Sinorhizobium medicae (strain WSM419) (Ensifer medicae)).